A 155-amino-acid polypeptide reads, in one-letter code: Small ribosomal subunit protein uS7 (155 aa).

The protein belongs to the universal ribosomal protein uS7 family. As to quaternary structure, part of the 30S ribosomal subunit. Contacts proteins S9 and S11.

One of the primary rRNA binding proteins, it binds directly to 16S rRNA where it nucleates assembly of the head domain of the 30S subunit. Is located at the subunit interface close to the decoding center, probably blocks exit of the E-site tRNA. This Pelodictyon phaeoclathratiforme (strain DSM 5477 / BU-1) protein is Small ribosomal subunit protein uS7.